Consider the following 704-residue polypeptide: DNA-binding protein RFX2 (704 aa).

Residues 1 to 39 are disordered; sequence MQNSEGGADSPASVALRPSAAAPPVPASPQRVLVQAASS. Positions 10–20 are enriched in low complexity; that stretch reads SPASVALRPSA. Ser28 bears the Phosphoserine mark. A DNA-binding region (RFX-type winged-helix) is located at residues 199–274; the sequence is HLQWLLDNYE…YHYYGIRLKP (76 aa). The segment at 292 to 334 is disordered; the sequence is QQPMHQKPRYRPAQKTDSLGDSSSHSGLHSTPEQTTAAQNQHH. Residues 307-334 are compositionally biased toward low complexity; the sequence is TDSLGDSSSHSGLHSTPEQTTAAQNQHH. Ser416 carries the phosphoserine modification.

Belongs to the RFX family. As to quaternary structure, homodimer; probably only forms homodimers in testis. Heterodimer; heterodimerizes with RFX1 and RFX3.

It localises to the nucleus. The protein localises to the cytoplasm. Its function is as follows. Transcription factor that acts as a key regulator of spermatogenesis. Acts by regulating expression of genes required for the haploid phase during spermiogenesis, such as genes required for cilium assembly and function. Recognizes and binds the X-box, a regulatory motif with DNA sequence 5'-GTNRCC(0-3N)RGYAAC-3' present on promoters. Probably activates transcription of the testis-specific histone gene H1-6. The protein is DNA-binding protein RFX2 (RFX2) of Pongo abelii (Sumatran orangutan).